A 369-amino-acid chain; its full sequence is Cyclin-I2 (369 aa).

The segment at 1 to 116 (MASGAQLPPQ…SRKPRNLEGD (116 aa)) is disordered. Low complexity-rich tracts occupy residues 64–76 (AASL…AVPV) and 83–101 (APAG…EQAP).

Belongs to the cyclin family.

The polypeptide is Cyclin-I2 (CCNI2) (Homo sapiens (Human)).